The primary structure comprises 92 residues: LKMGAMFVLLLLFTLASSQQEGDVQARKTSLKSDFYRALRQYDRQCTLVNNCDRNGERACNGDCSCEGQICKCGYRVSPGKSGCACTCRNAK.

An N-terminal signal peptide occupies residues 1–19 (LKMGAMFVLLLLFTLASSQ). Residues 20-44 (QEGDVQARKTSLKSDFYRALRQYDR) constitute a propeptide that is removed on maturation. At Q45 the chain carries Pyrrolidone carboxylic acid.

This sequence belongs to the conotoxin S superfamily. In terms of processing, contains 5 disulfide bonds. Expressed by the venom duct.

Its subcellular location is the secreted. In Conus achatinus (Little frog cone), this protein is Conotoxin Ac8.1.